Reading from the N-terminus, the 248-residue chain is UPF0651 protein YPL107W, mitochondrial (248 aa).

The transit peptide at 1–26 (MIRNQGWSLLYRIYPVRRFTRYSRVD) directs the protein to the mitochondrion. Residues 69-116 (KKIAGVQVPAKPQEPDNCCMSGCVNCVWEIYSEDLRDWKHRRKEAAEK) form the Oxidoreductase-like domain.

The protein belongs to the UPF0651 family.

Its subcellular location is the mitochondrion. In Saccharomyces cerevisiae (strain ATCC 204508 / S288c) (Baker's yeast), this protein is UPF0651 protein YPL107W, mitochondrial.